A 731-amino-acid chain; its full sequence is ARS-binding factor 1 (731 aa).

A Glycyl lysine isopeptide (Lys-Gly) (interchain with G-Cter in ubiquitin) cross-link involves residue K18. Composition is skewed to low complexity over residues 84-99 (ASSE…NTNP) and 111-129 (NNMN…NKVS). Disordered stretches follow at residues 84–132 (ASSE…SNDS), 146–227 (ANTH…DDVH), 251–308 (VANV…PSSI), and 439–463 (YNDL…GTNL). The segment covering 149 to 161 (HPDDTNDKVESRS) has biased composition (basic and acidic residues). Over residues 177 to 186 (IFKQQGVTIK) the composition is skewed to polar residues. T189 is modified (phosphothreonine). Position 193 is a phosphoserine (S193). Low complexity-rich tracts occupy residues 270–308 (TNNN…PSSI) and 445–454 (SSSSNNNNNN). S467 carries the phosphoserine modification. Residues 475–539 (EISSAGTSSN…PSVNKWSKPD (65 aa)) form a disordered region. Low complexity predominate over residues 481–510 (TSSNTTKNVNNNKNDSNDDNNGNNNNDASN). Phosphoserine is present on residues S554 and S618. 2 disordered regions span residues 590–643 (RSID…DDKL) and 687–731 (KNTT…LRGQ). S624 carries the phosphoserine; by PKC modification. C-terminal sequence regions lie at residues 624-628 (SKRQH) and 639-662 (EDDK…KEVE). A compositionally biased stretch (basic and acidic residues) spans 634–643 (LEERNEDDKL). A compositionally biased stretch (basic residues) spans 689–698 (TTHHNNHHSQ). S720 bears the Phosphoserine; by CK2 mark.

The protein belongs to the BAF1 family. Component of the global genome repair (GGR) complex composed of at least ABF1, RAD7 and RAD16. Interacts with PSE1. In terms of processing, extensively phosphorylated on Ser and Thr residues.

Its subcellular location is the nucleus. Its function is as follows. General regulatory factor (GRF) that contributes to transcriptional activation of a large number of genes, as well as to DNA replication, silencing and telomere structure. Involved in the transcription activation of a subset of ribosomal protein genes. Binds the ARS-elements found in many promoters. Binds to the sequence 5'-TCN(7)ACG-3'. Influences on genome-wide nucleosome occupancy and affects chromatin structure, and probably dynamics. As a component of the global genome repair (GGR) complex, promotes global genome nucleotide excision repair (GG-NER) which removes DNA damage from nontranscribing DNA. Component of the regulatory network controlling mitotic and meiotic cell cycle progression. This is ARS-binding factor 1 (ABF1) from Saccharomyces cerevisiae (strain ATCC 204508 / S288c) (Baker's yeast).